The primary structure comprises 550 residues: Silent protein UshA(0) (550 aa).

A signal peptide spans 1–25 (MKFLKRGVALALLAAFALTTQPAQA). Positions 41, 43, 84, 116, 217, 252, and 254 each coordinate a divalent metal cation. A disulfide bridge links cysteine 258 with cysteine 275. Residues phenylalanine 429 and 498–504 (FNATGGD) each bind substrate.

Belongs to the 5'-nucleotidase family. Requires a divalent metal cation as cofactor.

Its subcellular location is the periplasm. The protein is Silent protein UshA(0) (ushA) of Salmonella typhimurium (strain LT2 / SGSC1412 / ATCC 700720).